Reading from the N-terminus, the 339-residue chain is Anthranilate phosphoribosyltransferase (339 aa).

5-phospho-alpha-D-ribose 1-diphosphate-binding positions include G79, 82–83 (GD), S87, 89–92 (NIST), 107–115 (KHGNRSISS), and S119. G79 is an anthranilate binding site. S91 lines the Mg(2+) pocket. Position 110 (N110) interacts with anthranilate. Residue R165 participates in anthranilate binding. Positions 224 and 225 each coordinate Mg(2+).

Belongs to the anthranilate phosphoribosyltransferase family. In terms of assembly, homodimer. Requires Mg(2+) as cofactor.

The catalysed reaction is N-(5-phospho-beta-D-ribosyl)anthranilate + diphosphate = 5-phospho-alpha-D-ribose 1-diphosphate + anthranilate. It participates in amino-acid biosynthesis; L-tryptophan biosynthesis; L-tryptophan from chorismate: step 2/5. Functionally, catalyzes the transfer of the phosphoribosyl group of 5-phosphorylribose-1-pyrophosphate (PRPP) to anthranilate to yield N-(5'-phosphoribosyl)-anthranilate (PRA). The protein is Anthranilate phosphoribosyltransferase of Listeria welshimeri serovar 6b (strain ATCC 35897 / DSM 20650 / CCUG 15529 / CIP 8149 / NCTC 11857 / SLCC 5334 / V8).